The following is a 49-amino-acid chain: MVMAVYRCAKCGKEVELDLENTREVRCPYCGSKILYKPRPRVARRVKAI.

Cys11, Cys27, and Cys30 together coordinate Zn(2+).

Belongs to the archaeal Rpo12/eukaryotic RPC10 RNA polymerase subunit family. As to quaternary structure, part of the RNA polymerase complex. It depends on Zn(2+) as a cofactor.

It localises to the cytoplasm. The catalysed reaction is RNA(n) + a ribonucleoside 5'-triphosphate = RNA(n+1) + diphosphate. In terms of biological role, DNA-dependent RNA polymerase (RNAP) catalyzes the transcription of DNA into RNA using the four ribonucleoside triphosphates as substrates. The protein is DNA-directed RNA polymerase subunit Rpo12 of Thermococcus onnurineus (strain NA1).